The sequence spans 255 residues: Small ribosomal subunit protein uS2 (255 aa).

It belongs to the universal ribosomal protein uS2 family.

The protein is Small ribosomal subunit protein uS2 of Streptococcus pyogenes serotype M28 (strain MGAS6180).